The sequence spans 382 residues: ATP phosphoribosyltransferase regulatory subunit (382 aa).

The protein belongs to the class-II aminoacyl-tRNA synthetase family. HisZ subfamily. As to quaternary structure, heteromultimer composed of HisG and HisZ subunits.

The protein localises to the cytoplasm. It participates in amino-acid biosynthesis; L-histidine biosynthesis; L-histidine from 5-phospho-alpha-D-ribose 1-diphosphate: step 1/9. Functionally, required for the first step of histidine biosynthesis. May allow the feedback regulation of ATP phosphoribosyltransferase activity by histidine. This Burkholderia pseudomallei (strain K96243) protein is ATP phosphoribosyltransferase regulatory subunit.